We begin with the raw amino-acid sequence, 150 residues long: NADH-quinone oxidoreductase subunit A (150 aa).

The next 3 membrane-spanning stretches (helical) occupy residues 14–34, 66–86, and 96–116; these read FAVF…GAFF, FYLV…LYAW, and IGFI…VYLV.

The protein belongs to the complex I subunit 3 family. In terms of assembly, NDH-1 is composed of 13 different subunits. Subunits NuoA, H, J, K, L, M, N constitute the membrane sector of the complex.

It localises to the cell inner membrane. It carries out the reaction a quinone + NADH + 5 H(+)(in) = a quinol + NAD(+) + 4 H(+)(out). In terms of biological role, NDH-1 shuttles electrons from NADH, via FMN and iron-sulfur (Fe-S) centers, to quinones in the respiratory chain. The immediate electron acceptor for the enzyme in this species is believed to be ubiquinone. Couples the redox reaction to proton translocation (for every two electrons transferred, four hydrogen ions are translocated across the cytoplasmic membrane), and thus conserves the redox energy in a proton gradient. The sequence is that of NADH-quinone oxidoreductase subunit A from Yersinia enterocolitica serotype O:8 / biotype 1B (strain NCTC 13174 / 8081).